The sequence spans 1096 residues: uncharacterized protein (1096 aa).

The protein belongs to the IIV-6 261R/396L/443R family.

This is an uncharacterized protein from Invertebrate iridescent virus 3 (IIV-3).